The primary structure comprises 122 residues: Small ribosomal subunit protein uS13 (122 aa).

The segment at 93–122 (RRGLPVRGQRTKTNARTRKGPKKTIAGKKK) is disordered.

The protein belongs to the universal ribosomal protein uS13 family. Part of the 30S ribosomal subunit. Forms a loose heterodimer with protein S19. Forms two bridges to the 50S subunit in the 70S ribosome.

In terms of biological role, located at the top of the head of the 30S subunit, it contacts several helices of the 16S rRNA. In the 70S ribosome it contacts the 23S rRNA (bridge B1a) and protein L5 of the 50S subunit (bridge B1b), connecting the 2 subunits; these bridges are implicated in subunit movement. Contacts the tRNAs in the A and P-sites. The polypeptide is Small ribosomal subunit protein uS13 (Corynebacterium kroppenstedtii (strain DSM 44385 / JCM 11950 / CIP 105744 / CCUG 35717)).